A 520-amino-acid polypeptide reads, in one-letter code: GMP synthase [glutamine-hydrolyzing] (520 aa).

Positions 4 to 202 (KILILDFGSQ…VHDICGCGSD (199 aa)) constitute a Glutamine amidotransferase type-1 domain. Catalysis depends on Cys81, which acts as the Nucleophile. Active-site residues include His176 and Glu178. In terms of domain architecture, GMPS ATP-PPase spans 203–395 (WNMPDYVEEA…LGLPHDMVYR (193 aa)). Residue 230–236 (SGGVDSS) participates in ATP binding.

In terms of assembly, homodimer.

It carries out the reaction XMP + L-glutamine + ATP + H2O = GMP + L-glutamate + AMP + diphosphate + 2 H(+). The protein operates within purine metabolism; GMP biosynthesis; GMP from XMP (L-Gln route): step 1/1. Functionally, catalyzes the synthesis of GMP from XMP. This is GMP synthase [glutamine-hydrolyzing] from Thiobacillus denitrificans (strain ATCC 25259 / T1).